Here is a 255-residue protein sequence, read N- to C-terminus: DNA repair protein RecO (255 aa).

It belongs to the RecO family.

Involved in DNA repair and RecF pathway recombination. The sequence is that of DNA repair protein RecO from Listeria monocytogenes serotype 4a (strain HCC23).